Consider the following 437-residue polypeptide: RNA-binding motif, single-stranded-interacting protein 3 (437 aa).

The tract at residues 28 to 57 is disordered; the sequence is YAPAPHPMAPPSPSTNSSSNNSSNNSSGEQ. The segment covering 31-40 has biased composition (pro residues); it reads APHPMAPPSP. The span at 41-54 shows a compositional bias: low complexity; the sequence is STNSSSNNSSNNSS. 2 RRM domains span residues 61–134 and 140–225; these read TNLY…MAKQ and TNLY…FADG. A compositionally biased stretch (polar residues) spans 399 to 422; sequence TSPQTVAPSSQDTSGQQQQIAVDT. The tract at residues 399–437 is disordered; the sequence is TSPQTVAPSSQDTSGQQQQIAVDTSNEHAPAYSYQQSKP.

As to expression, expressed in fetal brain, fetal lung, fetal liver, heart, brain, placenta, lung, liver, muscle, kidney and pancreas.

It localises to the cytoplasm. Functionally, binds poly(A) and poly(U) oligoribonucleotides. The protein is RNA-binding motif, single-stranded-interacting protein 3 (RBMS3) of Homo sapiens (Human).